A 343-amino-acid polypeptide reads, in one-letter code: Anthranilate phosphoribosyltransferase (343 aa).

5-phospho-alpha-D-ribose 1-diphosphate-binding positions include Gly-84, 87 to 88 (GD), Thr-92, 94 to 97 (NIST), 112 to 120 (KHGNRGVSS), and Ser-124. Gly-84 is an anthranilate binding site. Ser-96 is a binding site for Mg(2+). Asn-115 contributes to the anthranilate binding site. Arg-170 serves as a coordination point for anthranilate. Mg(2+)-binding residues include Asp-229 and Glu-230.

It belongs to the anthranilate phosphoribosyltransferase family. As to quaternary structure, homodimer. It depends on Mg(2+) as a cofactor.

The catalysed reaction is N-(5-phospho-beta-D-ribosyl)anthranilate + diphosphate = 5-phospho-alpha-D-ribose 1-diphosphate + anthranilate. The protein operates within amino-acid biosynthesis; L-tryptophan biosynthesis; L-tryptophan from chorismate: step 2/5. In terms of biological role, catalyzes the transfer of the phosphoribosyl group of 5-phosphorylribose-1-pyrophosphate (PRPP) to anthranilate to yield N-(5'-phosphoribosyl)-anthranilate (PRA). The protein is Anthranilate phosphoribosyltransferase of Burkholderia orbicola (strain AU 1054).